The sequence spans 256 residues: Imidazole glycerol phosphate synthase subunit HisF (256 aa).

Active-site residues include D11 and D130.

The protein belongs to the HisA/HisF family. Heterodimer of HisH and HisF.

Its subcellular location is the cytoplasm. The enzyme catalyses 5-[(5-phospho-1-deoxy-D-ribulos-1-ylimino)methylamino]-1-(5-phospho-beta-D-ribosyl)imidazole-4-carboxamide + L-glutamine = D-erythro-1-(imidazol-4-yl)glycerol 3-phosphate + 5-amino-1-(5-phospho-beta-D-ribosyl)imidazole-4-carboxamide + L-glutamate + H(+). It participates in amino-acid biosynthesis; L-histidine biosynthesis; L-histidine from 5-phospho-alpha-D-ribose 1-diphosphate: step 5/9. Functionally, IGPS catalyzes the conversion of PRFAR and glutamine to IGP, AICAR and glutamate. The HisF subunit catalyzes the cyclization activity that produces IGP and AICAR from PRFAR using the ammonia provided by the HisH subunit. The polypeptide is Imidazole glycerol phosphate synthase subunit HisF (Methylocella silvestris (strain DSM 15510 / CIP 108128 / LMG 27833 / NCIMB 13906 / BL2)).